Consider the following 187-residue polypeptide: GTP cyclohydrolase 1 (187 aa).

Zn(2+) contacts are provided by Cys-81, His-84, and Cys-152.

This sequence belongs to the GTP cyclohydrolase I family. Toroid-shaped homodecamer, composed of two pentamers of five dimers.

The catalysed reaction is GTP + H2O = 7,8-dihydroneopterin 3'-triphosphate + formate + H(+). It functions in the pathway cofactor biosynthesis; 7,8-dihydroneopterin triphosphate biosynthesis; 7,8-dihydroneopterin triphosphate from GTP: step 1/1. This Pyrobaculum aerophilum (strain ATCC 51768 / DSM 7523 / JCM 9630 / CIP 104966 / NBRC 100827 / IM2) protein is GTP cyclohydrolase 1.